A 128-amino-acid polypeptide reads, in one-letter code: Natriuretic peptides A (128 aa).

The segment at 36-84 is disordered; it reads QVASEQNEEAGAVLSALPEVPSWPGEAGPAQREGGALGRGPWDSSDRSA. Positions 68–78 are excised as a propeptide; it reads EGGALGRGPWD. Position 104 is a phosphoserine (Ser104). An intrachain disulfide couples Cys105 to Cys121. Residues 122 to 126 form an important for degradation of atrial natriuretic peptide by IDE region; that stretch reads NSFRY.

Belongs to the natriuretic peptide family. In terms of assembly, homodimer; disulfide-linked antiparallel dimer. Post-translationally, the precursor molecule is proteolytically cleaved by CORIN at Arg-98 to produce atrial natriuretic peptide. Undergoes further proteolytic cleavage by unknown proteases to give rise to long-acting natriuretic peptide, vessel dilator and kaliuretic peptide. Additional processing gives rise to the auriculin and atriopeptin peptides. In the kidneys, alternative processing by an unknown protease results in the peptide urodilatin. In terms of processing, cleavage by MME initiates degradation of the factor and thereby regulates its activity. Degraded by IDE (in vitro). During IDE degradation, the resulting products can temporarily stimulate NPR2 to produce cGMP, before the fragments are completely degraded and inactivated by IDE (in vitro). Degraded by IDE. Post-translationally, phosphorylation on Ser-104 decreases vasorelaxant activity.

The protein localises to the secreted. It is found in the perikaryon. The protein resides in the cell projection. In terms of biological role, hormone that plays a key role in mediating cardio-renal homeostasis, and is involved in vascular remodeling and regulating energy metabolism. Acts by specifically binding and stimulating NPR1 to produce cGMP, which in turn activates effector proteins, such as PRKG1, that drive various biological responses. Regulates vasodilation, natriuresis, diuresis and aldosterone synthesis and is therefore essential for regulating blood pressure, controlling the extracellular fluid volume and maintaining the fluid-electrolyte balance. Also involved in inhibiting cardiac remodeling and cardiac hypertrophy by inducing cardiomyocyte apoptosis and attenuating the growth of cardiomyocytes and fibroblasts. Plays a role in female pregnancy by promoting trophoblast invasion and spiral artery remodeling in uterus, and thus prevents pregnancy-induced hypertension. In adipose tissue, acts in various cGMP- and PKG-dependent pathways to regulate lipid metabolism and energy homeostasis. This includes up-regulating lipid metabolism and mitochondrial oxygen utilization by activating the AMP-activated protein kinase (AMPK), and increasing energy expenditure by acting via MAPK11 to promote the UCP1-dependent thermogenesis of brown adipose tissue. Binds the clearance receptor NPR3 which removes the hormone from circulation. May have a role in cardio-renal homeostasis through regulation of natriuresis, diuresis, vasodilation, and inhibiting aldosterone synthesis. In vitro, promotes the production of cGMP and induces vasodilation. May promote natriuresis, at least in part, by enhancing prostaglandin E2 synthesis resulting in the inhibition of renal Na+-K+-ATPase. However reports on the involvement of this peptide in mammal blood volume and blood pressure homeostasis are conflicting; according to a report, in vivo it is not sufficient to activate cGMP and does not inhibit collecting duct transport nor effect diuresis and natriuresis. Appears to bind to specific receptors that are distinct from the receptors bound by atrial natriuretic peptide and vessel dilator. Possibly enhances protein excretion in urine by decreasing proximal tubular protein reabsorption. Its function is as follows. May have a role in cardio-renal homeostasis through regulation of natriuresis, diuresis, and vasodilation. In vitro, promotes the production of cGMP and induces vasodilation. May promote natriuresis, at least in part, by enhancing prostaglandin E2 synthesis resulting in the inhibition of renal Na+-K+-ATPase. However reports on the involvement of this peptide in mammal blood volume and blood pressure homeostasis are conflicting; according to a report it is not sufficient to activate cGMP and does not inhibit collecting duct transport nor effect diuresis and natriuresis. Appears to bind to specific receptors that are distinct from the receptors bound by the atrial natriuretic and long-acting natriuretic peptides. Possibly functions in protein excretion in urine by maintaining the integrity of the proximal tubules and enhancing protein excretion by decreasing proximal tubular protein reabsorption. Functionally, may have a role in cardio-renal homeostasis through regulation of diuresis and inhibiting aldosterone synthesis. In vitro, promotes the production of cGMP and induces vasodilation. May promote natriuresis, at least in part, by enhancing prostaglandin E2 synthesis resulting in the inhibition of renal Na+-K+-ATPase. May have a role in potassium excretion but not sodium excretion (natriuresis). Possibly enhances protein excretion in urine by decreasing proximal tubular protein reabsorption. In terms of biological role, hormone produced in the kidneys that appears to be important for maintaining cardio-renal homeostasis. Mediates vasodilation, natriuresis and diuresis primarily in the renal system, in order to maintain the extracellular fluid volume and control the fluid-electrolyte balance. Specifically binds and stimulates cGMP production by renal transmembrane receptors, likely NPR1. Urodilatin not ANP, may be the natriuretic peptide responsible for the regulation of sodium and water homeostasis in the kidney. May have a role in cardio-renal homeostasis through regulation of natriuresis and vasodilation. In vivo promotes natriuresis and in vitro, vasodilates renal artery strips. Its function is as follows. May have a role in cardio-renal homeostasis through regulation of regulation of natriuresis and vasodilation. In vivo promotes natriuresis. In vitro, vasodilates intestinal smooth muscle but not smooth muscle strips. Functionally, may have a role in cardio-renal homeostasis through regulation of natriuresis and vasodilation. In vivo promotes natriuresis. In vitro, selectively vasodilates intestinal and vascular smooth muscle strips. In terms of biological role, may have a role in cardio-renal homeostasis through regulation of natriuresis and vasodilation. In vivo promotes natriuresis. In vitro, selectively vasodilates intestinal smooth muscle but not vascular smooth muscle strips. The chain is Natriuretic peptides A (NPPA) from Cavia porcellus (Guinea pig).